Here is a 219-residue protein sequence, read N- to C-terminus: Ribose-5-phosphate isomerase A (219 aa).

Residues 28 to 31 (TGST), 81 to 84 (DGAD), and 94 to 97 (KGGG) contribute to the substrate site. The Proton acceptor role is filled by Glu-103. Position 121 (Lys-121) interacts with substrate.

This sequence belongs to the ribose 5-phosphate isomerase family. As to quaternary structure, homodimer.

It carries out the reaction aldehydo-D-ribose 5-phosphate = D-ribulose 5-phosphate. Its pathway is carbohydrate degradation; pentose phosphate pathway; D-ribose 5-phosphate from D-ribulose 5-phosphate (non-oxidative stage): step 1/1. Functionally, catalyzes the reversible conversion of ribose-5-phosphate to ribulose 5-phosphate. This chain is Ribose-5-phosphate isomerase A, found in Pectobacterium carotovorum subsp. carotovorum (strain PC1).